The primary structure comprises 390 residues: 3-ketoacyl-CoA thiolase (390 aa).

The active-site Acyl-thioester intermediate is the C95. Catalysis depends on proton acceptor residues H346 and C376.

It belongs to the thiolase-like superfamily. Thiolase family. As to quaternary structure, heterotetramer of two alpha chains (FadB) and two beta chains (FadA).

The protein resides in the cytoplasm. The catalysed reaction is an acyl-CoA + acetyl-CoA = a 3-oxoacyl-CoA + CoA. The protein operates within lipid metabolism; fatty acid beta-oxidation. Functionally, catalyzes the final step of fatty acid oxidation in which acetyl-CoA is released and the CoA ester of a fatty acid two carbons shorter is formed. This chain is 3-ketoacyl-CoA thiolase, found in Psychrobacter cryohalolentis (strain ATCC BAA-1226 / DSM 17306 / VKM B-2378 / K5).